We begin with the raw amino-acid sequence, 320 residues long: Protein MRG1 (320 aa).

Residues 1 to 28 (MGSSSKEETASDGDTASGGASPSNDGRL) are disordered. Residues 12-24 (DGDTASGGASPSN) show a composition bias toward polar residues. Residues 30 to 80 (SEGERVLAYHGPRVYGAKVQKVELRKKEWKYFVHYLGWNKNWDEWVSADRL) form the Tudor-knot domain. Basic and acidic residues predominate over residues 93 to 104 (ALDKKQGVEKGT). The disordered stretch occupies residues 93 to 147 (ALDKKQGVEKGTKSGRSAQTKTRSSADTKADKDDTKTNAAKGKKRKHESGNEKDN). The span at 106 to 115 (SGRSAQTKTR) shows a compositional bias: polar residues. Residues 116 to 128 (SSADTKADKDDTK) show a composition bias toward basic and acidic residues. An MRG domain is found at 150–318 (AEKLMKIQIP…KVSDGKGKGK (169 aa)).

Interacts with HAM1 and HAM2. Interacts (via MRG domain) with CO. Component of the NuA4 histone acetyltransferase complex. Ubiquitous. Mainly expressed in the vasculature of cotyledons and leaves, and in roots and inflorescences.

The protein resides in the nucleus. In terms of biological role, chromatin remodeling factor. Acts as a 'reader' protein by binding to H3K36me3 and H3K36me3 to control histone H4 acetylation. Increases the transcriptional levels of the flowering time genes FLC and FT. Binds the chromatin at the FT promoter upon interaction with CO. This chain is Protein MRG1, found in Arabidopsis thaliana (Mouse-ear cress).